A 150-amino-acid polypeptide reads, in one-letter code: Ribonuclease HI (150 aa).

The region spanning 1-141 (MKLINAYTDG…VDVLARGQAM (141 aa)) is the RNase H type-1 domain. Positions 9, 47, 69, and 133 each coordinate Mg(2+).

This sequence belongs to the RNase H family. As to quaternary structure, monomer. Mg(2+) serves as cofactor.

Its subcellular location is the cytoplasm. It carries out the reaction Endonucleolytic cleavage to 5'-phosphomonoester.. Endonuclease that specifically degrades the RNA of RNA-DNA hybrids. The chain is Ribonuclease HI from Xylella fastidiosa (strain Temecula1 / ATCC 700964).